The primary structure comprises 186 residues: Alkyl hydroperoxide reductase AhpD (186 aa).

The Proton donor role is filled by cysteine 132. Cysteine 132 and cysteine 135 are disulfide-bonded. Cysteine 135 (cysteine sulfenic acid (-SOH) intermediate) is an active-site residue.

It belongs to the AhpD family.

It catalyses the reaction N(6)-[(R)-dihydrolipoyl]-L-lysyl-[lipoyl-carrier protein] + a hydroperoxide = N(6)-[(R)-lipoyl]-L-lysyl-[lipoyl-carrier protein] + an alcohol + H2O. Functionally, antioxidant protein with alkyl hydroperoxidase activity. Required for the reduction of the AhpC active site cysteine residues and for the regeneration of the AhpC enzyme activity. The sequence is that of Alkyl hydroperoxide reductase AhpD from Anaeromyxobacter dehalogenans (strain 2CP-C).